The chain runs to 426 residues: Gamma-glutamyl phosphate reductase (426 aa).

This sequence belongs to the gamma-glutamyl phosphate reductase family.

It is found in the cytoplasm. It carries out the reaction L-glutamate 5-semialdehyde + phosphate + NADP(+) = L-glutamyl 5-phosphate + NADPH + H(+). The protein operates within amino-acid biosynthesis; L-proline biosynthesis; L-glutamate 5-semialdehyde from L-glutamate: step 2/2. Catalyzes the NADPH-dependent reduction of L-glutamate 5-phosphate into L-glutamate 5-semialdehyde and phosphate. The product spontaneously undergoes cyclization to form 1-pyrroline-5-carboxylate. The polypeptide is Gamma-glutamyl phosphate reductase (Nitrobacter winogradskyi (strain ATCC 25391 / DSM 10237 / CIP 104748 / NCIMB 11846 / Nb-255)).